A 444-amino-acid chain; its full sequence is MATVILFVAWMACLMVGVCYQEFQTQQNFPDISNPSQELNQEPAHRIVQLDSIQNNGALNMSTGNVLNMSPPPPSPCLSRAKIRHAFKYVTTILSCVIFLVGIVGNSTLLRIIYKNKCMRNGPNVLIASLALGDLFYILIAIPIISISFWLSTGHSEYIYQLVHLYRARVYSLSLCALSIDRYRAVASWNRIRSIGIPVRKAIELTLIWAVAIIVAVPEAIAFNLVELDFRGQTILVCMLPMEQTSDFMRFYQEVKVWWLFGFYFCLPLACTGVFYTLMSCEMLSIKNGMRIALNDHMKQRREVAKTVFCLVVIFALCWLPLHVSSIFVRLSATVKRACILKNKRSCIMAEIQTGVNYQLLMVMNYTGINMASLNSCIGPVALYFVSRKFKNCFQSCLCCWCHRPTLTITPMDEKGSGGKWKANGHDLDLDRSSSRLSNKYSSS.

A signal peptide spans 1 to 18 (MATVILFVAWMACLMVGV). Residues 19–88 (CYQEFQTQQN…SRAKIRHAFK (70 aa)) are Extracellular-facing. The N-linked (GlcNAc...) asparagine glycan is linked to asparagine 60. A helical membrane pass occupies residues 89–113 (YVTTILSCVIFLVGIVGNSTLLRII). The Cytoplasmic portion of the chain corresponds to 114 to 124 (YKNKCMRNGPN). Residues 125-145 (VLIASLALGDLFYILIAIPII) traverse the membrane as a helical segment. Topologically, residues 146 to 161 (SISFWLSTGHSEYIYQ) are extracellular. The helical transmembrane segment at 162–180 (LVHLYRARVYSLSLCALSI) threads the bilayer. Residues 181 to 201 (DRYRAVASWNRIRSIGIPVRK) are Cytoplasmic-facing. The chain crosses the membrane as a helical span at residues 202–226 (AIELTLIWAVAIIVAVPEAIAFNLV). Over 227–254 (ELDFRGQTILVCMLPMEQTSDFMRFYQE) the chain is Extracellular. Residues 255-279 (VKVWWLFGFYFCLPLACTGVFYTLM) traverse the membrane as a helical segment. Residues 280–307 (SCEMLSIKNGMRIALNDHMKQRREVAKT) lie on the Cytoplasmic side of the membrane. The helical transmembrane segment at 308–328 (VFCLVVIFALCWLPLHVSSIF) threads the bilayer. The Extracellular portion of the chain corresponds to 329–365 (VRLSATVKRACILKNKRSCIMAEIQTGVNYQLLMVMN). The chain crosses the membrane as a helical span at residues 366-386 (YTGINMASLNSCIGPVALYFV). Topologically, residues 387 to 444 (SRKFKNCFQSCLCCWCHRPTLTITPMDEKGSGGKWKANGHDLDLDRSSSRLSNKYSSS) are cytoplasmic. Positions 416 to 444 (GSGGKWKANGHDLDLDRSSSRLSNKYSSS) are disordered. Over residues 424–434 (NGHDLDLDRSS) the composition is skewed to basic and acidic residues. Positions 435–444 (SRLSNKYSSS) are enriched in low complexity.

Belongs to the G-protein coupled receptor 1 family. Endothelin receptor subfamily.

It is found in the cell membrane. Receptor for endothelin-3. Mediates its action by association with G proteins that activate a phosphatidylinositol-calcium second messenger system. This chain is Endothelin-3 receptor, found in Xenopus laevis (African clawed frog).